The sequence spans 185 residues: ATP-dependent protease subunit HslV (185 aa).

T2 is an active-site residue. Positions 157, 160, and 163 each coordinate Na(+).

The protein belongs to the peptidase T1B family. HslV subfamily. In terms of assembly, a double ring-shaped homohexamer of HslV is capped on each side by a ring-shaped HslU homohexamer. The assembly of the HslU/HslV complex is dependent on binding of ATP.

Its subcellular location is the cytoplasm. The enzyme catalyses ATP-dependent cleavage of peptide bonds with broad specificity.. Allosterically activated by HslU binding. In terms of biological role, protease subunit of a proteasome-like degradation complex believed to be a general protein degrading machinery. The sequence is that of ATP-dependent protease subunit HslV from Vibrio cholerae serotype O1 (strain ATCC 39315 / El Tor Inaba N16961).